The chain runs to 330 residues: MSIIVTGAAGFIGSNLLQALNRRGETDIIAVDDLTDGEQFRNLADADIADYLDQNDFLERYARGDFGTVRALFHQGACASTLESNGRYMMENNYRYSCRLLESSLELGVPFLYASSAAVYGSGRTFREARQYERPLNVYGYSKFLFDQRVRRALPQARSQVVGLRYFNVYGPREEHKGRMASVAYHCYQQLRRDGRVELFGEHGGFPPGGHLRDFVAVEDVARVNLHFFDHPQRSGIFNLGSGQARTFNEVALAVINSVRANADQPPLSLQQAVESGLLGYREFPESLRARYQSHTCADLELLREAGYRDDFQSLEEGVAGYCRWLARSA.

Residues 11–12 (FI), 32–33 (DD), Gln39, Gln54, 75–79 (QGACA), and Asn92 contribute to the NADP(+) site. Tyr139 serves as the catalytic Proton acceptor. Lys143 contacts NADP(+). Substrate is bound at residue Asn168. Residues Val169 and Lys177 each coordinate NADP(+). Lys177 serves as the catalytic Proton acceptor. Substrate is bound by residues Arg179, His186, 200–203 (FGEH), Arg213, and Tyr292.

The protein belongs to the NAD(P)-dependent epimerase/dehydratase family. HldD subfamily. In terms of assembly, homopentamer. It depends on NADP(+) as a cofactor.

It catalyses the reaction ADP-D-glycero-beta-D-manno-heptose = ADP-L-glycero-beta-D-manno-heptose. Its pathway is nucleotide-sugar biosynthesis; ADP-L-glycero-beta-D-manno-heptose biosynthesis; ADP-L-glycero-beta-D-manno-heptose from D-glycero-beta-D-manno-heptose 7-phosphate: step 4/4. It participates in bacterial outer membrane biogenesis; LPS core biosynthesis. Its function is as follows. Catalyzes the interconversion between ADP-D-glycero-beta-D-manno-heptose and ADP-L-glycero-beta-D-manno-heptose via an epimerization at carbon 6 of the heptose. In Pseudomonas aeruginosa (strain ATCC 15692 / DSM 22644 / CIP 104116 / JCM 14847 / LMG 12228 / 1C / PRS 101 / PAO1), this protein is ADP-L-glycero-D-manno-heptose-6-epimerase.